Consider the following 250-residue polypeptide: Transcriptional activator protein EchR (250 aa).

One can recognise an HTH luxR-type domain in the interval 173 to 238 (KSQEPNIFSQ…HAIRLGVEMN (66 aa)). The segment at residues 197-216 (YQEIALILGITTSTVKFHIG) is a DNA-binding region (H-T-H motif).

Belongs to the autoinducer-regulated transcriptional regulatory protein family.

Functionally, functions as a potential ohlL-responsive transcriptional regulator. The polypeptide is Transcriptional activator protein EchR (echR) (Dickeya chrysanthemi (Pectobacterium chrysanthemi)).